The sequence spans 359 residues: SAGA complex subunit Spt7 (359 aa).

As to quaternary structure, component of the Spt-Ada-Gcn5 acetyltransferase (SAGA) complex consisting of wda/Taf5L, Saf6, Taf9, Taf10b, Taf12, Ada1, Spt3, Spt7, Spt20, Sf3b3, Sf3b5, Nipped-A/Tra1, a histone acetyltransferase (HAT) module made up of Gcn5, Ada2b (Isoform B), Ada3 and Sgf29, and a deubiquitinase (DUB) module made up of not/nonstop, Sgf11 and e(y)2 tethered to SAGA by Atxn7. Interacts with Ada2b; the interaction is direct.

It localises to the nucleus. Functionally, component of the transcription regulatory complex SAGA, a multiprotein complex that activates transcription by remodeling chromatin and mediating histone acetylation and deubiquitination. The SAGA complex predominantly acetylates histone H3. The protein is SAGA complex subunit Spt7 of Drosophila melanogaster (Fruit fly).